We begin with the raw amino-acid sequence, 446 residues long: Maltoporin (446 aa).

Residues 1–25 form the signal peptide; it reads MMITLRKLPLAVAVAAGVMSAQAMA.

The protein belongs to the porin LamB (TC 1.B.3) family. As to quaternary structure, homotrimer formed of three 18-stranded antiparallel beta-barrels, containing three independent channels.

The protein resides in the cell outer membrane. It carries out the reaction beta-maltose(in) = beta-maltose(out). Involved in the transport of maltose and maltodextrins. This is Maltoporin from Escherichia coli O7:K1 (strain IAI39 / ExPEC).